A 184-amino-acid chain; its full sequence is Gastrokine-2 (184 aa).

The signal sequence occupies residues 1–20; sequence MKPLVAFLVVLSIFGIQSQA. One can recognise a BRICHOS domain in the interval 54–151; the sequence is HSGSCSSTTI…LCKHMPLYEG (98 aa). A disulfide bridge links Cys81 with Cys143.

As to quaternary structure, heterodimer with TFF1; disulfide linked. Interacts with TFF2. In terms of tissue distribution, stomach foveolar epithelium and duodenal Brunner's glands.

It localises to the secreted. Its subcellular location is the golgi apparatus. The chain is Gastrokine-2 (Gkn2) from Mus musculus (Mouse).